A 767-amino-acid chain; its full sequence is ATP-dependent rRNA helicase SPB4 (767 aa).

Positions 28–56 match the Q motif motif; it reads WTKLTPPLTPWVVSLLSDLGFGQMTPVQA. The region spanning 59 to 291 is the Helicase ATP-binding domain; sequence IPLFVSHKDV…RIGLRNPVRV (233 aa). An ATP-binding site is contributed by 72–79; the sequence is AVTGSGKT. A disordered region spans residues 132–176; sequence HVQAQQQQDQDEQDEQDEQEAQSDSDTDPDASTALNNKRKSSNHL. Residues 140 to 160 show a composition bias toward acidic residues; it reads DQDEQDEQDEQEAQSDSDTDP. A DEAD box motif is present at residues 239–242; sequence DEAD. One can recognise a Helicase C-terminal domain in the interval 330–507; it reads QLARIVLFES…ILEPAEDDAS (178 aa). The interval 609 to 767 is disordered; the sequence is KLSGDQAKPP…NADAEPFFVI (159 aa). Basic and acidic residues-rich tracts occupy residues 636-645 and 659-681; these read CDSHDSDDAH and LERE…ANRE. Residues 654 to 746 are a coiled coil; the sequence is KNKRKLEREK…RANSDNDDAM (93 aa). The span at 690 to 700 shows a compositional bias: polar residues; sequence LKTQAAESSSN. The span at 701 to 746 shows a compositional bias: basic and acidic residues; it reads AKHEPPQDDHDEHDWNDDYRKLQKDKRQQRQRNKADRANSDNDDAM. The segment covering 749–761 has biased composition (low complexity); sequence NSDSDAAAANADA.

The protein belongs to the DEAD box helicase family. DDX55/SPB4 subfamily. As to quaternary structure, component of pre-60S ribosomal complexes.

It is found in the nucleus. The protein resides in the nucleolus. The catalysed reaction is ATP + H2O = ADP + phosphate + H(+). ATP-binding RNA helicase involved in the biogenesis of 60S ribosomal subunits. Binds 90S pre-ribosomal particles and dissociates from pre-60S ribosomal particles after processing of 27SB pre-rRNA. Required for the normal formation of 18S rRNA through the processing of pre-rRNAs at sites A0, A1 and A2, and the normal formation of 25S and 5.8S rRNAs through the processing of pre-rRNAs at sites C1 and C2. The protein is ATP-dependent rRNA helicase SPB4 of Mycosarcoma maydis (Corn smut fungus).